A 267-amino-acid chain; its full sequence is Eukaryotic translation initiation factor 3 subunit J (267 aa).

The segment at 1-70 is disordered; it reads MSWNDDDVFA…KDKKSSTDQV (70 aa). Over residues 24–38 the composition is skewed to acidic residues; that stretch reads WDAEEPIMESWDAEE. Basic and acidic residues predominate over residues 39 to 66; the sequence is TPAKKETSPKPDSKKNAKKDSKKDKKSS. Residues 192–220 adopt a coiled-coil conformation; that stretch reads IESIRQSIATLNVLMKDKEREERRARLAK.

It belongs to the eIF-3 subunit J family. As to quaternary structure, component of the eukaryotic translation initiation factor 3 (eIF-3) complex.

It is found in the cytoplasm. Its function is as follows. Component of the eukaryotic translation initiation factor 3 (eIF-3) complex, which is involved in protein synthesis of a specialized repertoire of mRNAs and, together with other initiation factors, stimulates binding of mRNA and methionyl-tRNAi to the 40S ribosome. The eIF-3 complex specifically targets and initiates translation of a subset of mRNAs involved in cell proliferation. In Vanderwaltozyma polyspora (strain ATCC 22028 / DSM 70294 / BCRC 21397 / CBS 2163 / NBRC 10782 / NRRL Y-8283 / UCD 57-17) (Kluyveromyces polysporus), this protein is Eukaryotic translation initiation factor 3 subunit J.